A 501-amino-acid chain; its full sequence is Probable cytosol aminopeptidase (501 aa).

Mn(2+) contacts are provided by Lys267 and Asp272. Lys279 is a catalytic residue. The Mn(2+) site is built by Asp290, Asp349, and Glu351. Residue Arg353 is part of the active site.

It belongs to the peptidase M17 family. It depends on Mn(2+) as a cofactor.

Its subcellular location is the cytoplasm. It carries out the reaction Release of an N-terminal amino acid, Xaa-|-Yaa-, in which Xaa is preferably Leu, but may be other amino acids including Pro although not Arg or Lys, and Yaa may be Pro. Amino acid amides and methyl esters are also readily hydrolyzed, but rates on arylamides are exceedingly low.. The catalysed reaction is Release of an N-terminal amino acid, preferentially leucine, but not glutamic or aspartic acids.. In terms of biological role, presumably involved in the processing and regular turnover of intracellular proteins. Catalyzes the removal of unsubstituted N-terminal amino acids from various peptides. This is Probable cytosol aminopeptidase from Desulfovibrio desulfuricans (strain ATCC 27774 / DSM 6949 / MB).